The following is a 155-amino-acid chain: Ribosome maturation factor RimP (155 aa).

The protein belongs to the RimP family.

The protein resides in the cytoplasm. Required for maturation of 30S ribosomal subunits. This is Ribosome maturation factor RimP from Gloeothece citriformis (strain PCC 7424) (Cyanothece sp. (strain PCC 7424)).